We begin with the raw amino-acid sequence, 725 residues long: MDAFKLLTRSTKFKTGPSSSSASLPSTGKAENPQLFRNSEAEKLLEEQKNGKKRKRGSAADEPEEREPNLDFFSSNKGSSKKVVKAEEAPSDEERGSGSEDEDEMDEVQRRTILNSHKIKVTDMRELEEIQPVQAQGEEEPKKKKKKRKQKEEPAQTLTKKEQKKARRLFPRPLVSFKELRTQYKISRRLAENITEQGFTVPTEVQLGTLPLLLGDRTIGQSKTEEPVEPDLLVVAPTGSGKTLSFLIPVINKIVRHHHGQQEERGIFAVVVAPTKELASQIVNEGRKLVSGTGVKITLMKKGMQVVEREDDDEDVLDEGSSESSESEDDEKTTEKKSKGKAPVTKSDILVTTPLQLVNALSANKTKPMATLPLVRNIVLDEADVLLDPLFREQTLDIWRACTHPELRASLWSATMGSSIEDLAKSTIKERKDASSLTKSYPLYRLVVGLKDSAIPNIQHKLVYAATEQGKLLGLRQLLHPAAAAASDIRLRPPFLIFTQTIPRAVALHSELRYDIPPEAGGSSRIAVLHSDLSDGQRSEIMKNFRKGEIWILVTTDLLARGIDFRGINGVVNYDIPNSAAVYVHRVGRTGRAGREGGVAVTYYTKEDIPYVKSIANVIDVSEKLRGTEGEKSVQKWLLDSLPDLSKKDKKELKKHGVRARQTNLKSVADDKQQRKTRISTKSGFERRMENKKKGAIAASRNRKLQGPSGAEPDSGDDGWGGIQE.

The tract at residues Met-1–Lys-165 is disordered. Residues Lys-14–Ala-30 show a composition bias toward low complexity. Composition is skewed to basic and acidic residues over residues Ser-39–Asn-50 and Val-84–Gly-98. The Q motif motif lies at Glu-179–Leu-207. Positions Lys-223–Ala-434 constitute a Helicase ATP-binding domain. ATP is bound at residue Ala-236–Thr-243. Residues Val-307–Val-344 are disordered. Residues Arg-309–Lys-332 are compositionally biased toward acidic residues. The DEAD box signature appears at Asp-381 to Asp-384. The Helicase C-terminal domain occupies Gly-474–Leu-642. Residues Asp-649–Glu-725 form a disordered region. Residues Gly-684–Lys-693 are compositionally biased toward basic and acidic residues.

This sequence belongs to the DEAD box helicase family. DDX52/ROK1 subfamily. In terms of assembly, interacts with the U3 snoRNA and is associated with the 90S and 40S pre-ribosomes.

The protein resides in the nucleus. It is found in the nucleolus. The catalysed reaction is ATP + H2O = ADP + phosphate + H(+). ATP-dependent RNA helicase involved in 40S ribosomal subunit biogenesis. Required for the processing and cleavage of 35S pre-rRNA at sites A0, A1, and A2, leading to mature 18S rRNA. The chain is ATP-dependent RNA helicase rok1 (rok1) from Aspergillus oryzae (strain ATCC 42149 / RIB 40) (Yellow koji mold).